We begin with the raw amino-acid sequence, 137 residues long: Putative pre-16S rRNA nuclease (137 aa).

The protein belongs to the YqgF nuclease family.

The protein localises to the cytoplasm. Could be a nuclease involved in processing of the 5'-end of pre-16S rRNA. This Chromobacterium violaceum (strain ATCC 12472 / DSM 30191 / JCM 1249 / CCUG 213 / NBRC 12614 / NCIMB 9131 / NCTC 9757 / MK) protein is Putative pre-16S rRNA nuclease.